The following is a 370-amino-acid chain: Anhydro-N-acetylmuramic acid kinase (370 aa).

13–20 (GTSMDGVD) lines the ATP pocket.

Belongs to the anhydro-N-acetylmuramic acid kinase family.

It carries out the reaction 1,6-anhydro-N-acetyl-beta-muramate + ATP + H2O = N-acetyl-D-muramate 6-phosphate + ADP + H(+). It participates in amino-sugar metabolism; 1,6-anhydro-N-acetylmuramate degradation. It functions in the pathway cell wall biogenesis; peptidoglycan recycling. Functionally, catalyzes the specific phosphorylation of 1,6-anhydro-N-acetylmuramic acid (anhMurNAc) with the simultaneous cleavage of the 1,6-anhydro ring, generating MurNAc-6-P. Is required for the utilization of anhMurNAc either imported from the medium or derived from its own cell wall murein, and thus plays a role in cell wall recycling. This Vibrio parahaemolyticus serotype O3:K6 (strain RIMD 2210633) protein is Anhydro-N-acetylmuramic acid kinase.